Consider the following 187-residue polypeptide: Elongation factor P (187 aa).

The protein belongs to the elongation factor P family.

It localises to the cytoplasm. Its pathway is protein biosynthesis; polypeptide chain elongation. Functionally, involved in peptide bond synthesis. Stimulates efficient translation and peptide-bond synthesis on native or reconstituted 70S ribosomes in vitro. Probably functions indirectly by altering the affinity of the ribosome for aminoacyl-tRNA, thus increasing their reactivity as acceptors for peptidyl transferase. The sequence is that of Elongation factor P from Flavobacterium psychrophilum (strain ATCC 49511 / DSM 21280 / CIP 103535 / JIP02/86).